A 353-amino-acid polypeptide reads, in one-letter code: uncharacterized protein (353 aa).

The first 30 residues, 1–30, serve as a signal peptide directing secretion; that stretch reads MHLRHLFSPRLRGSLLLGSLLVASSFSTLA.

This is an uncharacterized protein from Salmonella typhi.